A 499-amino-acid polypeptide reads, in one-letter code: Membrane-associated tyrosine- and threonine-specific cdc2-inhibitory kinase (499 aa).

At Met1 the chain carries N-acetylmethionine. The interval 1–29 (MLERPPALAMPMPTEGTPPPLSGTPIPVP) is disordered. The segment covering 16–28 (GTPPPLSGTPIPV) has biased composition (pro residues). Thr17 carries the phosphothreonine modification. Ser40 bears the Phosphoserine mark. The tract at residues 42–72 (KRPRGLSRSLPPPPPAKGSIPISRLFPPRTP) is disordered. A phosphoserine mark is found at Ser94 and Ser120. The region spanning 110 to 359 (FQRLSRLGHG…AEALLALPVL (250 aa)) is the Protein kinase domain. Residues 116–124 (LGHGSYGEV) and Lys139 each bind ATP. Phosphoserine occurs at positions 143 and 160. The Proton acceptor role is filled by Asp233. 3 residues coordinate Mg(2+): Asn238, Asp251, and Gly253. Positions 382 to 398 (LWQALLALLCWLWHGLA) match the Membrane-association motif motif. Residues 398 to 499 (AHPASWLQPL…SLFEDTLDPT (102 aa)) form an interaction with PIN1 region. Ser426 bears the Phosphoserine; by PLK1 mark. The interaction with CDC2-CCNB1 stretch occupies residues 437-499 (GPSLSPEAVL…SLFEDTLDPT (63 aa)). Residues 451–485 (GSTSTPRSRCTPRDALDLSDINSEPPRGSFPSFEP) form a disordered region. Phosphoserine is present on residues Ser469, Ser473, and Ser482. Position 495 is a phosphothreonine; by PLK1 (Thr495).

It belongs to the protein kinase superfamily. Ser/Thr protein kinase family. WEE1 subfamily. In terms of assembly, interacts with CDC2-CCNB1 complex. Can also interact with PIN1 when phosphorylated by CDC2-CCNB1. Post-translationally, autophosphorylated. Phosphorylated by CDC2-CCNB1 complexes on undefined serine and threonine residues. The phosphorylation by CDC2-CCNB1 complexes may inhibit the catalytic activity.

It is found in the endoplasmic reticulum membrane. The protein localises to the golgi apparatus membrane. It carries out the reaction L-seryl-[protein] + ATP = O-phospho-L-seryl-[protein] + ADP + H(+). The enzyme catalyses L-threonyl-[protein] + ATP = O-phospho-L-threonyl-[protein] + ADP + H(+). Its activity is regulated as follows. Negatively regulated by hyperphosphorylation during mitosis. The hyperphosphorylated form does not associate with CCNB1-CDC2 complexes. The PLK1 protein kinase may be required for mitotic phosphorylation. Functionally, acts as a negative regulator of entry into mitosis (G2 to M transition) by phosphorylation of the CDK1 kinase specifically when CDK1 is complexed to cyclins. Mediates phosphorylation of CDK1 predominantly on 'Thr-14'. Also involved in Golgi fragmentation. May be involved in phosphorylation of CDK1 on 'Tyr-15' to a lesser degree, however tyrosine kinase activity is unclear and may be indirect. The sequence is that of Membrane-associated tyrosine- and threonine-specific cdc2-inhibitory kinase (PKMYT1) from Homo sapiens (Human).